The primary structure comprises 158 residues: 2-C-methyl-D-erythritol 2,4-cyclodiphosphate synthase (158 aa).

A divalent metal cation-binding residues include D8 and H10. Residues 8-10 (DAH) and 34-35 (HS) each bind 4-CDP-2-C-methyl-D-erythritol 2-phosphate. H42 lines the a divalent metal cation pocket. 4-CDP-2-C-methyl-D-erythritol 2-phosphate-binding positions include 56–58 (DIG), 132–135 (TTTE), and R142.

Belongs to the IspF family. As to quaternary structure, homotrimer. The cofactor is a divalent metal cation.

It carries out the reaction 4-CDP-2-C-methyl-D-erythritol 2-phosphate = 2-C-methyl-D-erythritol 2,4-cyclic diphosphate + CMP. It participates in isoprenoid biosynthesis; isopentenyl diphosphate biosynthesis via DXP pathway; isopentenyl diphosphate from 1-deoxy-D-xylulose 5-phosphate: step 4/6. Its function is as follows. Involved in the biosynthesis of isopentenyl diphosphate (IPP) and dimethylallyl diphosphate (DMAPP), two major building blocks of isoprenoid compounds. Catalyzes the conversion of 4-diphosphocytidyl-2-C-methyl-D-erythritol 2-phosphate (CDP-ME2P) to 2-C-methyl-D-erythritol 2,4-cyclodiphosphate (ME-CPP) with a corresponding release of cytidine 5-monophosphate (CMP). This Nitrosococcus oceani (strain ATCC 19707 / BCRC 17464 / JCM 30415 / NCIMB 11848 / C-107) protein is 2-C-methyl-D-erythritol 2,4-cyclodiphosphate synthase.